The following is a 50-amino-acid chain: Large ribosomal subunit protein bL33B (50 aa).

This sequence belongs to the bacterial ribosomal protein bL33 family.

This is Large ribosomal subunit protein bL33B (rpmG2) from Enterococcus faecalis (strain ATCC 700802 / V583).